The sequence spans 1051 residues: Putative helicase/primase complex protein (1051 aa).

The protein belongs to the asfivirus F1055L family.

Its function is as follows. May be involved in DNA replication. The polypeptide is Putative helicase/primase complex protein (Ornithodoros (relapsing fever ticks)).